Here is a 319-residue protein sequence, read N- to C-terminus: Thioredoxin reductase (319 aa).

FAD is bound at residue 36–43 (TGTNKGGQ). Cys136 and Cys139 are disulfide-bonded. 288 to 297 (DVIDHVYRQA) is an FAD binding site.

It belongs to the class-II pyridine nucleotide-disulfide oxidoreductase family. As to quaternary structure, homodimer. FAD serves as cofactor.

It is found in the cytoplasm. It carries out the reaction [thioredoxin]-dithiol + NADP(+) = [thioredoxin]-disulfide + NADPH + H(+). In Buchnera aphidicola subsp. Acyrthosiphon pisum (strain APS) (Acyrthosiphon pisum symbiotic bacterium), this protein is Thioredoxin reductase (trxB).